A 359-amino-acid chain; its full sequence is Serum paraoxonase/arylesterase 1 (359 aa).

The cysteines at positions 42 and 353 are disulfide-linked. An N-linked (GlcNAc...) asparagine glycan is attached at Asn-50. 2 residues coordinate Ca(2+): Glu-53 and Asp-54. The active-site Proton acceptor is His-115. Ca(2+) contacts are provided by Ile-117, Asn-168, Asp-169, and Asn-224. The N-linked (GlcNAc...) asparagine glycan is linked to Asn-253. Asp-269 and Asn-270 together coordinate Ca(2+). N-linked (GlcNAc...) asparagine glycans are attached at residues Asn-270 and Asn-324.

It belongs to the paraoxonase family. Homodimer. Interacts with CLU. The cofactor is Ca(2+). Post-translationally, glycosylated. The signal sequence is not cleaved. Plasma. Associated with HDL.

The protein resides in the secreted. The protein localises to the extracellular space. It carries out the reaction a phenyl acetate + H2O = a phenol + acetate + H(+). It catalyses the reaction An aryl dialkyl phosphate + H2O = dialkyl phosphate + an aryl alcohol.. The catalysed reaction is an N-acyl-L-homoserine lactone + H2O = an N-acyl-L-homoserine + H(+). Hydrolyzes the toxic metabolites of a variety of organophosphorus insecticides. Capable of hydrolyzing a broad spectrum of organophosphate substrates and lactones, and a number of aromatic carboxylic acid esters. Mediates an enzymatic protection of low density lipoproteins against oxidative modification. The polypeptide is Serum paraoxonase/arylesterase 1 (PON1) (Oryctolagus cuniculus (Rabbit)).